Reading from the N-terminus, the 550-residue chain is Leucine-rich repeat LGI family member 2 (550 aa).

The N-terminal stretch at 1-25 (MALWRGGGALGLLLLSAACLIPPSA) is a signal peptide. An LRRNT domain is found at 26–62 (QVRRLARCPATCSCTKESIICVGSSWVPRIVPGDISS). An N-linked (GlcNAc...) asparagine glycan is attached at Asn67. 2 LRR repeats span residues 83-104 (SLQL…AFAG) and 107-128 (HLEY…AFRG). One can recognise an LRRCT domain in the interval 140–190 (NKFECDCKAKWLYLWLKMTNSTVSDVLCIGPPEYQEKKLNEVTSFDYECTT). N-linked (GlcNAc...) asparagine glycosylation is present at Asn159. 7 EAR repeats span residues 224-266 (DFVV…EWDH), 270-312 (NFRS…KYDE), 316-363 (KFVK…KWNS), 365-408 (GFYS…QWNK), 412-455 (KFVP…RWNS), 457-499 (QFVE…QWDK), and 503-545 (QFKK…EHII). A glycan (N-linked (GlcNAc...) asparagine) is linked at Asn276. The N-linked (GlcNAc...) asparagine glycan is linked to Asn407.

Brain.

Its subcellular location is the secreted. Functionally, required for the development of soma-targeting inhibitory GABAergic synapses made by parvalbumin-positive basket cells. The sequence is that of Leucine-rich repeat LGI family member 2 (Lgi2) from Mus musculus (Mouse).